Consider the following 287-residue polypeptide: Proteasome subunit alpha (287 aa).

The disordered stretch occupies residues 241–287; that stretch reads GVVAGEEPHTAAHAPSVPQPGAPAGLGDPGAPDTGGTAGSGGEAPTT. Residues 262 to 275 are compositionally biased toward low complexity; the sequence is APAGLGDPGAPDTG. Gly residues predominate over residues 276-287; the sequence is GTAGSGGEAPTT.

This sequence belongs to the peptidase T1A family. In terms of assembly, the 20S proteasome core is composed of 14 alpha and 14 beta subunits that assemble into four stacked heptameric rings, resulting in a barrel-shaped structure. The two inner rings, each composed of seven catalytic beta subunits, are sandwiched by two outer rings, each composed of seven alpha subunits. The catalytic chamber with the active sites is on the inside of the barrel. Has a gated structure, the ends of the cylinder being occluded by the N-termini of the alpha-subunits. Is capped by the proteasome-associated ATPase, ARC.

The protein localises to the cytoplasm. The protein operates within protein degradation; proteasomal Pup-dependent pathway. With respect to regulation, the formation of the proteasomal ATPase ARC-20S proteasome complex, likely via the docking of the C-termini of ARC into the intersubunit pockets in the alpha-rings, may trigger opening of the gate for substrate entry. Interconversion between the open-gate and close-gate conformations leads to a dynamic regulation of the 20S proteasome proteolysis activity. In terms of biological role, component of the proteasome core, a large protease complex with broad specificity involved in protein degradation. The sequence is that of Proteasome subunit alpha from Geodermatophilus obscurus (strain ATCC 25078 / DSM 43160 / JCM 3152 / CCUG 61914 / KCC A-0152 / KCTC 9177 / NBRC 13315 / NRRL B-3577 / G-20).